The sequence spans 526 residues: Protein MGF 505-2R (526 aa).

The protein belongs to the asfivirus MGF 505 family.

Plays a role in virus cell tropism, and may be required for efficient virus replication in macrophages. In African swine fever virus (isolate Pig/Kenya/KEN-50/1950) (ASFV), this protein is Protein MGF 505-2R.